Consider the following 188-residue polypeptide: Putative manganese efflux pump MntP (188 aa).

6 helical membrane passes run 3–23 (LSAT…ASIG), 41–61 (LIFG…GMLA), 62–82 (SQFV…FLGG), 107–129 (LLVT…LAFL), 143–163 (ATFL…PLLG), and 168–188 (ILGG…HFAG).

This sequence belongs to the MntP (TC 9.B.29) family.

Its subcellular location is the cell inner membrane. Functionally, probably functions as a manganese efflux pump. This is Putative manganese efflux pump MntP from Klebsiella pneumoniae (strain 342).